Here is a 313-residue protein sequence, read N- to C-terminus: Inner membrane ABC transporter permease protein YdcU (313 aa).

The Cytoplasmic segment spans residues 1–25 (MAMNVLQSPSRPGLGKVSGFFWHNP). A helical membrane pass occupies residues 26 to 46 (GLGLFLLLLGPLMWFGIVYFG). Residues 47–92 (SLLTLLWQGFYTFDDFTMSVTPELTLANIRALFNPANYDIILRTLT) are Periplasmic-facing. One can recognise an ABC transmembrane type-1 domain in the interval 87–302 (ILRTLTMAVA…PIILIALYLA (216 aa)). A helical membrane pass occupies residues 93-113 (MAVAVTIASAILAFPMAWYMA). Topologically, residues 114-122 (RYTSGKMKA) are cytoplasmic. A helical membrane pass occupies residues 123–143 (FFYIAVMLPMWASYIVKAYAW). At 144 to 154 (TLLLAKDGVAQ) the chain is on the periplasmic side. The chain crosses the membrane as a helical span at residues 155–175 (WFLQHLGLEPLLTAFLTLPAV). At 176–187 (GGNTLSTSGLGR) the chain is on the cytoplasmic side. Residues 188 to 208 (FLVFLYIWLPFMILPVQAALE) traverse the membrane as a helical segment. At 209–230 (RLPPSLLQASADLGARPRQTFR) the chain is on the periplasmic side. The helical transmembrane segment at 231-251 (YVVLPLAIPGIAAGSIFTFSL) threads the bilayer. Thr252 is a topological domain (cytoplasmic). Residues 253–273 (LGDFIVPQLVGPPGYFIGNMV) form a helical membrane-spanning segment. Topologically, residues 274-283 (YSQQGAIGNM) are periplasmic. A helical transmembrane segment spans residues 284 to 304 (PMAAAFTLVPIILIALYLAFV). Residues 305 to 313 (KRLGAFDAL) lie on the Cytoplasmic side of the membrane.

Belongs to the binding-protein-dependent transport system permease family. CysTW subfamily.

It is found in the cell inner membrane. In terms of biological role, probably part of the ABC transporter complex YdcSTUV. Probably responsible for the translocation of the substrate across the membrane. The polypeptide is Inner membrane ABC transporter permease protein YdcU (ydcU) (Escherichia coli (strain K12)).